We begin with the raw amino-acid sequence, 715 residues long: Dynein axonemal intermediate chain 7 (715 aa).

The tract at residues 291–322 (AVSKDLQEENKQENESNSVHEEETKAEGQGDV) is disordered. The span at 295–318 (DLQEENKQENESNSVHEEETKAEG) shows a compositional bias: basic and acidic residues.

This sequence belongs to the DNAI7 family. As to quaternary structure, part of the multisubunit axonemal dynein complex formed at least of two heavy chains and a number of intermediate and light chains. Associates with tubulin. Interacts with microtubule. Post-translationally, ubiquitinated. Ubiquitination leads to its degradation through the 26S proteasome. Ubiquitin-proteasome-mediated DNAI7 degradation occurs in mitosis.

It is found in the cell projection. It localises to the cilium. The protein resides in the cytoplasm. Functionally, via its association with the multisubunit axonemal dynein complex, is potentially involved in the regulation of cilia function. May act as a cell cycle regulator. This is Dynein axonemal intermediate chain 7 from Bos taurus (Bovine).